The chain runs to 226 residues: Probable amino-acid ABC transporter permease protein YckA (226 aa).

The region spanning isoleucine 27 to glutamine 215 is the ABC transmembrane type-1 domain. Transmembrane regions (helical) follow at residues leucine 31–alanine 51, valine 73–phenylalanine 93, serine 94–isoleucine 114, valine 160–leucine 180, and methionine 194–phenylalanine 214.

Belongs to the binding-protein-dependent transport system permease family. HisMQ subfamily.

It localises to the cell membrane. In terms of biological role, part of a binding-protein-dependent transport system. Probably responsible for the translocation of the substrate across the membrane. In Bacillus subtilis (strain 168), this protein is Probable amino-acid ABC transporter permease protein YckA (yckA).